The sequence spans 305 residues: rRNA 2'-O-methyltransferase fibrillarin (305 aa).

The segment at 1 to 70 (MAYTPGSRGG…SGGRGGAKGG (70 aa)) is disordered. The span at 7-69 (SRGGRGGSRG…SSGGRGGAKG (63 aa)) shows a compositional bias: gly residues. A phosphoserine mark is found at Ser111 and Ser114. S-adenosyl-L-methionine contacts are provided by residues 160 to 161 (TS), 179 to 180 (EF), 204 to 205 (DA), and 224 to 227 (DVAQ).

The protein belongs to the methyltransferase superfamily. Fibrillarin family. Component of box C/D small nucleolar ribonucleoprotein (snoRNP) particles. Post-translationally, by homology to other fibrillarins, some or all of the N-terminal domain arginines are modified to asymmetric dimethylarginine (DMA).

Its subcellular location is the nucleus. It localises to the nucleolus. The catalysed reaction is L-glutaminyl-[histone H2A] + S-adenosyl-L-methionine = N(5)-methyl-L-glutaminyl-[histone H2A] + S-adenosyl-L-homocysteine + H(+). In terms of biological role, S-adenosyl-L-methionine-dependent methyltransferase that has the ability to methylate both RNAs and proteins. Involved in pre-rRNA processing by catalyzing the site-specific 2'-hydroxyl methylation of ribose moieties in pre-ribosomal RNA. Site specificity is provided by a guide RNA that base pairs with the substrate. Methylation occurs at a characteristic distance from the sequence involved in base pairing with the guide RNA. Also acts as a protein methyltransferase by mediating methylation of 'Gln-105' of histone H2A (H2AQ105me), a modification that impairs binding of the FACT complex and is specifically present at 35S ribosomal DNA locus. In Schizosaccharomyces pombe (strain 972 / ATCC 24843) (Fission yeast), this protein is rRNA 2'-O-methyltransferase fibrillarin (fib1).